Here is a 401-residue protein sequence, read N- to C-terminus: Argininosuccinate synthase (401 aa).

Residues 9–17 and A35 each bind ATP; that span reads AYSGGLDTS. Y86 is an L-citrulline binding site. G116 contributes to the ATP binding site. Residues T118, N122, and D123 each coordinate L-aspartate. Residue N122 participates in L-citrulline binding. L-citrulline-binding residues include R126, S175, S184, E261, and Y273.

The protein belongs to the argininosuccinate synthase family. Type 1 subfamily. As to quaternary structure, homotetramer.

Its subcellular location is the cytoplasm. The enzyme catalyses L-citrulline + L-aspartate + ATP = 2-(N(omega)-L-arginino)succinate + AMP + diphosphate + H(+). Its pathway is amino-acid biosynthesis; L-arginine biosynthesis; L-arginine from L-ornithine and carbamoyl phosphate: step 2/3. The protein is Argininosuccinate synthase of Aquifex aeolicus (strain VF5).